Here is a 135-residue protein sequence, read N- to C-terminus: Transcription antitermination protein NusB (135 aa).

The protein belongs to the NusB family.

Its function is as follows. Involved in transcription antitermination. Required for transcription of ribosomal RNA (rRNA) genes. Binds specifically to the boxA antiterminator sequence of the ribosomal RNA (rrn) operons. This chain is Transcription antitermination protein NusB, found in Clostridium acetobutylicum (strain ATCC 824 / DSM 792 / JCM 1419 / IAM 19013 / LMG 5710 / NBRC 13948 / NRRL B-527 / VKM B-1787 / 2291 / W).